Consider the following 137-residue polypeptide: Large-conductance mechanosensitive channel (137 aa).

Transmembrane regions (helical) follow at residues 15 to 35 (VDLA…TSLV) and 81 to 101 (GKFI…FFVI).

The protein belongs to the MscL family. In terms of assembly, homopentamer.

The protein localises to the cell inner membrane. Functionally, channel that opens in response to stretch forces in the membrane lipid bilayer. May participate in the regulation of osmotic pressure changes within the cell. This Hyphomonas neptunium (strain ATCC 15444) protein is Large-conductance mechanosensitive channel.